Consider the following 103-residue polypeptide: MMGSKMASASRVVQVVKPHTPLIRFPDRRDNPKPNVSEVLRSAGLPSHTSSISQHSKGSKSPDWLMHQGPPDTAEMIKTLPQKYRRKLVSQEEIEFIQRGGPE.

Met1 carries the post-translational modification N-acetylmethionine. N6-succinyllysine is present on Lys5. The segment at 23–70 is disordered; sequence IRFPDRRDNPKPNVSEVLRSAGLPSHTSSISQHSKGSKSPDWLMHQGP. Low complexity predominate over residues 47 to 61; it reads SHTSSISQHSKGSKS. A phosphoserine mark is found at Ser61 and Ser90.

Belongs to the alpha-ketoglutarate dehydrogenase component 4 family. As to quaternary structure, component of the 2-oxoglutarate dehydrogenase complex (OGDHC), composed of OGDH (2-oxoglutarate dehydrogenase; also called E1 subunit), DLST (dihydrolipoamide succinyltransferase; also called E2 subunit) and DLD (dihydrolipoamide dehydrogenase; also called E3 subunit), and the assembly factor KGD4. Within OGDHC complex, interacts (via N-terminus) with E3 subunit and (via C-terminus) with E2 subunit.

The protein resides in the mitochondrion. Functionally, molecular adapter that is necessary to form a stable 2-oxoglutarate dehydrogenase enzyme complex (OGDHC). Enables the specific recruitment of E3 subunit to E2 subunit in the 2-oxoglutarate dehydrogenase complex (OGDHC). This chain is Alpha-ketoglutarate dehydrogenase component 4 (KGD4), found in Bos taurus (Bovine).